We begin with the raw amino-acid sequence, 141 residues long: Nucleoside diphosphate kinase (141 aa).

ATP-binding residues include Lys11, Phe59, Arg87, Thr93, Arg104, and Asn114. Catalysis depends on His117, which acts as the Pros-phosphohistidine intermediate.

It belongs to the NDK family. Homotetramer. Mg(2+) is required as a cofactor.

Its subcellular location is the cytoplasm. It catalyses the reaction a 2'-deoxyribonucleoside 5'-diphosphate + ATP = a 2'-deoxyribonucleoside 5'-triphosphate + ADP. The enzyme catalyses a ribonucleoside 5'-diphosphate + ATP = a ribonucleoside 5'-triphosphate + ADP. Functionally, major role in the synthesis of nucleoside triphosphates other than ATP. The ATP gamma phosphate is transferred to the NDP beta phosphate via a ping-pong mechanism, using a phosphorylated active-site intermediate. This chain is Nucleoside diphosphate kinase, found in Burkholderia thailandensis (strain ATCC 700388 / DSM 13276 / CCUG 48851 / CIP 106301 / E264).